The chain runs to 89 residues: Large ribosomal subunit protein eL31 (89 aa).

Belongs to the eukaryotic ribosomal protein eL31 family.

The polypeptide is Large ribosomal subunit protein eL31 (rpl31e) (Thermoplasma acidophilum (strain ATCC 25905 / DSM 1728 / JCM 9062 / NBRC 15155 / AMRC-C165)).